The sequence spans 145 residues: Ribosomal protein uL24-like (145 aa).

Disordered stretches follow at residues 1–21 and 122–145; these read MKFN…HFNA and KAKS…KMQE. Glycyl lysine isopeptide (Lys-Gly) (interchain with G-Cter in SUMO2) cross-links involve residues lysine 136 and lysine 142.

The protein belongs to the universal ribosomal protein uL24 family.

The polypeptide is Ribosomal protein uL24-like (RPL26L1) (Homo sapiens (Human)).